A 124-amino-acid polypeptide reads, in one-letter code: Profilin-2 (124 aa).

This sequence belongs to the profilin family. Occurs in many kinds of cells as a complex with monomeric actin in a 1:1 ratio. Interacts with forH.

Its subcellular location is the cytoplasm. The protein localises to the cytoskeleton. Its function is as follows. Binds to actin and affects the structure of the cytoskeleton. At high concentrations, profilin prevents the polymerization of actin, whereas it enhances it at low concentrations. By binding to PIP2, it inhibits the formation of IP3 and DG. In Dictyostelium discoideum (Social amoeba), this protein is Profilin-2 (proB).